A 254-amino-acid polypeptide reads, in one-letter code: 2-dehydro-3-deoxy-D-gluconate 5-dehydrogenase (254 aa).

L16 to I40 contributes to the NAD(+) binding site. Position 146 (S146) interacts with substrate. Catalysis depends on Y159, which acts as the Proton acceptor.

It belongs to the short-chain dehydrogenases/reductases (SDR) family.

The enzyme catalyses 2-dehydro-3-deoxy-D-gluconate + NAD(+) = 3-deoxy-D-glycero-2,5-hexodiulosonate + NADH + H(+). Its pathway is glycan metabolism; pectin degradation; 2-dehydro-3-deoxy-D-gluconate from pectin: step 5/5. Functionally, catalyzes the reduction of 2,5-diketo-3-deoxygluconate (DKII or 4,6-dihydroxy-2,5-dioxohexanoate) into 2-keto-3-deoxygluconate (KDG or 2-dehydro-3-deoxygluconate) with a concomitant oxidation of NADH. The protein is 2-dehydro-3-deoxy-D-gluconate 5-dehydrogenase (kduD) of Bacillus subtilis (strain 168).